The primary structure comprises 257 residues: MVGEEETKKRVVTESLGWLTESSIMPKKHRAIEGVGPSSIMELKAQLYKSQEEAKQTKDFTGSDAQYHRAKERIAAKDSFAAKNSGVESRNLKDKLEHKAVKDGAVSYAALEKKAQLYDKLARGELSDEEGEEKYCVDFFRKGIQHEDPKPSSTYNSSISAPPEDFKQDGEDDGSLFSTKFAGLGHAIGTADVGQHVRMVREVHEEVNQAREKATELKQRRQEQATNRREKLKQAYLRKQLEKLKAQQQQQEDEQKT.

Phosphoserine is present on Ser-127. Disordered regions lie at residues 146-174 (HEDP…EDDG) and 210-231 (AREK…RREK). Residues 151–160 (PSSTYNSSIS) show a composition bias toward polar residues. Positions 196 to 257 (HVRMVREVHE…QQQQEDEQKT (62 aa)) form a coiled coil.

This is an uncharacterized protein from Arabidopsis thaliana (Mouse-ear cress).